We begin with the raw amino-acid sequence, 529 residues long: MQQRRPVRRALLSVSDKAGIVEFAQALSARGVELLSTGGTARLLAEKGLPVTEVSDYTGFPEMMDGRVKTLHPKVHGGILGRRGQDDTIMEEHQIQPIDMVVVNLYPFAQTVAREGCSLEDAVENIDIGGPTMVRSAAKNHKDVAIVVKSSDYDAIIKEIDANEGSLTLETRFDLAIKAFEHTAAYDSMIANYFGSMVPAYHGESKEAAGRFPRTLNLNFIKKQDMRYGENSHQQAAFYIEENVKEASVATATQVQGKALSYNNIADTDAALECVKEFAEPACVIVKHANPCGVAIGNSILDAYDRAYKTDPTSAFGGIIAFNRELDAETAQAIISRQFVEVIIAPSASEEALKITAAKQNVRVLTCGQWGERVPGLDFKRVNGGLLVQDRDLGMVGAEELRVVTKRQPTEQELRDALFCWKVAKFVKSNAIVYAKNNMTIGIGAGQMSRVYSAKIAGIKAADEGLEVKGSSMASDAFFPFRDGIDAAAAAGVTCVIQPGGSIRDDEVIAAADEHGIAMLFTDMRHFRH.

Positions 1–148 constitute an MGS-like domain; sequence MQQRRPVRRA…KNHKDVAIVV (148 aa). The residue at position 287 (lysine 287) is an N6-acetyllysine.

This sequence belongs to the PurH family.

It catalyses the reaction (6R)-10-formyltetrahydrofolate + 5-amino-1-(5-phospho-beta-D-ribosyl)imidazole-4-carboxamide = 5-formamido-1-(5-phospho-D-ribosyl)imidazole-4-carboxamide + (6S)-5,6,7,8-tetrahydrofolate. It carries out the reaction IMP + H2O = 5-formamido-1-(5-phospho-D-ribosyl)imidazole-4-carboxamide. The protein operates within purine metabolism; IMP biosynthesis via de novo pathway; 5-formamido-1-(5-phospho-D-ribosyl)imidazole-4-carboxamide from 5-amino-1-(5-phospho-D-ribosyl)imidazole-4-carboxamide (10-formyl THF route): step 1/1. It functions in the pathway purine metabolism; IMP biosynthesis via de novo pathway; IMP from 5-formamido-1-(5-phospho-D-ribosyl)imidazole-4-carboxamide: step 1/1. The polypeptide is Bifunctional purine biosynthesis protein PurH (Escherichia coli O45:K1 (strain S88 / ExPEC)).